The primary structure comprises 570 residues: Sulfite reductase [NADPH] hemoprotein beta-component (570 aa).

[4Fe-4S] cluster-binding residues include Cys-434, Cys-440, Cys-479, and Cys-483. Cys-483 lines the siroheme pocket.

The protein belongs to the nitrite and sulfite reductase 4Fe-4S domain family. In terms of assembly, alpha(8)-beta(8). The alpha component is a flavoprotein, the beta component is a hemoprotein. Siroheme serves as cofactor. The cofactor is [4Fe-4S] cluster.

The catalysed reaction is hydrogen sulfide + 3 NADP(+) + 3 H2O = sulfite + 3 NADPH + 4 H(+). The protein operates within sulfur metabolism; hydrogen sulfide biosynthesis; hydrogen sulfide from sulfite (NADPH route): step 1/1. Component of the sulfite reductase complex that catalyzes the 6-electron reduction of sulfite to sulfide. This is one of several activities required for the biosynthesis of L-cysteine from sulfate. The protein is Sulfite reductase [NADPH] hemoprotein beta-component of Salmonella dublin (strain CT_02021853).